Reading from the N-terminus, the 543-residue chain is CTP synthase (543 aa).

Residues 1-267 (MKQTKYIFVT…LNPIAEILDL (267 aa)) form an amidoligase domain region. Residue S15 participates in CTP binding. Position 15 (S15) interacts with UTP. ATP is bound by residues 16–21 (SLGKGI) and D73. Positions 73 and 141 each coordinate Mg(2+). CTP is bound by residues 148 to 150 (DIE), 188 to 193 (KTKPTQ), and K224. UTP contacts are provided by residues 188–193 (KTKPTQ) and K224. Residues 292 to 543 (KIAFVGKYVD…IKAAINYEDN (252 aa)) form the Glutamine amidotransferase type-1 domain. G354 provides a ligand contact to L-glutamine. Catalysis depends on C381, which acts as the Nucleophile; for glutamine hydrolysis. Residues 382 to 385 (LGMQ), E405, and R473 contribute to the L-glutamine site. Catalysis depends on residues H516 and E518.

It belongs to the CTP synthase family. Homotetramer.

The catalysed reaction is UTP + L-glutamine + ATP + H2O = CTP + L-glutamate + ADP + phosphate + 2 H(+). The enzyme catalyses L-glutamine + H2O = L-glutamate + NH4(+). It carries out the reaction UTP + NH4(+) + ATP = CTP + ADP + phosphate + 2 H(+). The protein operates within pyrimidine metabolism; CTP biosynthesis via de novo pathway; CTP from UDP: step 2/2. Allosterically activated by GTP, when glutamine is the substrate; GTP has no effect on the reaction when ammonia is the substrate. The allosteric effector GTP functions by stabilizing the protein conformation that binds the tetrahedral intermediate(s) formed during glutamine hydrolysis. Inhibited by the product CTP, via allosteric rather than competitive inhibition. Catalyzes the ATP-dependent amination of UTP to CTP with either L-glutamine or ammonia as the source of nitrogen. Regulates intracellular CTP levels through interactions with the four ribonucleotide triphosphates. The protein is CTP synthase of Campylobacter jejuni subsp. doylei (strain ATCC BAA-1458 / RM4099 / 269.97).